Reading from the N-terminus, the 1253-residue chain is Cytoplasmic FMR1-interacting protein 2 (1253 aa).

The protein belongs to the CYFIP family.

The protein localises to the cytoplasm. Functionally, involved in T-cell adhesion and p53-dependent induction of apoptosis. Does not bind RNA. This Xenopus laevis (African clawed frog) protein is Cytoplasmic FMR1-interacting protein 2 (cyfip2).